We begin with the raw amino-acid sequence, 156 residues long: Ribonuclease pancreatic (156 aa).

Residues 1–26 (MGLEKSLVFFPLLVLLALGWVQPCLG) form the signal peptide. Substrate contacts are provided by K33 and R36. H38 functions as the Proton acceptor in the catalytic mechanism. Intrachain disulfides connect C54–C112, C68–C123, C86–C138, and C93–C100. Substrate is bound at residue 69–73 (KPVNT). An N-linked (GlcNAc...) asparagine glycan is attached at N90. Substrate contacts are provided by K94 and R113. The Proton donor role is filled by H147.

Belongs to the pancreatic ribonuclease family. In terms of assembly, monomer. Interacts with and forms tight 1:1 complexes with RNH1. Dimerization of two such complexes may occur. Interaction with RNH1 inhibits this protein. As to expression, pancreas.

Its subcellular location is the secreted. The catalysed reaction is an [RNA] containing cytidine + H2O = an [RNA]-3'-cytidine-3'-phosphate + a 5'-hydroxy-ribonucleotide-3'-[RNA].. The enzyme catalyses an [RNA] containing uridine + H2O = an [RNA]-3'-uridine-3'-phosphate + a 5'-hydroxy-ribonucleotide-3'-[RNA].. Endonuclease that catalyzes the cleavage of RNA on the 3' side of pyrimidine nucleotides. Acts on single-stranded and double-stranded RNA. The polypeptide is Ribonuclease pancreatic (RNASE1) (Glis glis (Fat dormouse)).